We begin with the raw amino-acid sequence, 474 residues long: Dihydrolipoyl dehydrogenase (474 aa).

FAD contacts are provided by residues 34 to 42 (EKEKLGGTC), lysine 51, and glycine 114. Cysteines 42 and 47 form a disulfide. NAD(+)-binding positions include 188-192 (GGGVI), glutamate 211, valine 245, and 278-281 (SIGR). Residues aspartate 320 and alanine 328 each coordinate FAD. The active-site Proton acceptor is the histidine 453.

Belongs to the class-I pyridine nucleotide-disulfide oxidoreductase family. Homodimer. FAD is required as a cofactor.

The protein localises to the cytoplasm. It catalyses the reaction N(6)-[(R)-dihydrolipoyl]-L-lysyl-[protein] + NAD(+) = N(6)-[(R)-lipoyl]-L-lysyl-[protein] + NADH + H(+). Its function is as follows. The branched-chain alpha-keto dehydrogenase complex catalyzes the overall conversion of alpha-keto acids to acyl-CoA and CO(2). It contains multiple copies of 3 enzymatic components: branched-chain alpha-keto acid decarboxylase (E1), lipoamide acyltransferase (E2) and lipoamide dehydrogenase (E3). This chain is Dihydrolipoyl dehydrogenase (bfmBC), found in Bacillus subtilis (strain 168).